Reading from the N-terminus, the 553-residue chain is 5'-nucleotidase (553 aa).

The first 21 residues, Met1–Gly21, serve as a signal peptide directing secretion. Cys22 carries N-palmitoyl cysteine lipidation. Residue Cys22 is the site of S-diacylglycerol cysteine attachment. Positions 45, 47, 88, 120, 221, 256, and 258 each coordinate a divalent metal cation. Substrate contacts are provided by residues Phe432 and Phe501–Asp507.

It belongs to the 5'-nucleotidase family. It depends on chloride as a cofactor. Mg(2+) serves as cofactor.

The protein localises to the cell outer membrane. It catalyses the reaction a ribonucleoside 5'-phosphate + H2O = a ribonucleoside + phosphate. In terms of biological role, degradation of extracellular 5'-nucleotides for nutritional needs. In Vibrio cholerae serotype O1 (strain ATCC 39315 / El Tor Inaba N16961), this protein is 5'-nucleotidase (nutA).